A 603-amino-acid polypeptide reads, in one-letter code: Elongation factor 4 (603 aa).

One can recognise a tr-type G domain in the interval 7–189; that stretch reads VRIRNFCIIA…AVVERIPPPP (183 aa). GTP contacts are provided by residues 19–24 and 136–139; these read DHGKST and NKID.

Belongs to the TRAFAC class translation factor GTPase superfamily. Classic translation factor GTPase family. LepA subfamily.

It localises to the cell inner membrane. It carries out the reaction GTP + H2O = GDP + phosphate + H(+). In terms of biological role, required for accurate and efficient protein synthesis under certain stress conditions. May act as a fidelity factor of the translation reaction, by catalyzing a one-codon backward translocation of tRNAs on improperly translocated ribosomes. Back-translocation proceeds from a post-translocation (POST) complex to a pre-translocation (PRE) complex, thus giving elongation factor G a second chance to translocate the tRNAs correctly. Binds to ribosomes in a GTP-dependent manner. The sequence is that of Elongation factor 4 from Trichormus variabilis (strain ATCC 29413 / PCC 7937) (Anabaena variabilis).